We begin with the raw amino-acid sequence, 269 residues long: Histone doublet H2B-H2A (269 aa).

Residues methionine 1 to lysine 168 form a histone fold region. The segment at arginine 210–alanine 249 is disordered. A compositionally biased stretch (basic residues) spans proline 224–lysine 241.

It is found in the host nucleus. The protein resides in the host cytoplasm. It localises to the virion. Functionally, histone-like protein that is recruited to viral factories during viral replication and participates in viral DNA packaging and virion production probably by forming unstable nucleosome-like particles. May compact the viral DNA. The protein is Histone doublet H2B-H2A of Melbournevirus (MelV).